A 193-amino-acid chain; its full sequence is Pyridoxal 5'-phosphate synthase subunit PdxT (193 aa).

52 to 54 is a binding site for L-glutamine; that stretch reads GES. The active-site Nucleophile is the cysteine 84. Residues arginine 111 and 139-140 each bind L-glutamine; that span reads IR. Catalysis depends on charge relay system residues histidine 176 and glutamate 178.

This sequence belongs to the glutaminase PdxT/SNO family. In the presence of PdxS, forms a dodecamer of heterodimers. Only shows activity in the heterodimer.

The catalysed reaction is aldehydo-D-ribose 5-phosphate + D-glyceraldehyde 3-phosphate + L-glutamine = pyridoxal 5'-phosphate + L-glutamate + phosphate + 3 H2O + H(+). The enzyme catalyses L-glutamine + H2O = L-glutamate + NH4(+). It functions in the pathway cofactor biosynthesis; pyridoxal 5'-phosphate biosynthesis. Catalyzes the hydrolysis of glutamine to glutamate and ammonia as part of the biosynthesis of pyridoxal 5'-phosphate. The resulting ammonia molecule is channeled to the active site of PdxS. This Pasteurella multocida (strain Pm70) protein is Pyridoxal 5'-phosphate synthase subunit PdxT.